Consider the following 126-residue polypeptide: Probable 4-amino-4-deoxy-L-arabinose-phosphoundecaprenol flippase subunit ArnF (126 aa).

Residues 1–4 (MKGY) lie on the Cytoplasmic side of the membrane. A helical transmembrane segment spans residues 5-25 (IWGLISVLLVTIAQLLLKWGV). Residues 26–49 (VNLPALNLGLHWFDIEWLWSHRHS) lie on the Periplasmic side of the membrane. Residues 50-70 (LVAVMAGLAGYLLSMLCWLFT) traverse the membrane as a helical segment. Residues 71–79 (LKYLPLNKA) lie on the Cytoplasmic side of the membrane. The chain crosses the membrane as a helical span at residues 80 to 100 (YPLISLSYVFVYLMVALLPWF). Topologically, residues 101-102 (NE) are periplasmic. A helical transmembrane segment spans residues 103–123 (TITLLKTAGVIFILYGVWLIS). Over 124–126 (RPE) the chain is Cytoplasmic.

It belongs to the ArnF family. Heterodimer of ArnE and ArnF.

It localises to the cell inner membrane. Its pathway is bacterial outer membrane biogenesis; lipopolysaccharide biosynthesis. Its function is as follows. Translocates 4-amino-4-deoxy-L-arabinose-phosphoundecaprenol (alpha-L-Ara4N-phosphoundecaprenol) from the cytoplasmic to the periplasmic side of the inner membrane. This Photorhabdus laumondii subsp. laumondii (strain DSM 15139 / CIP 105565 / TT01) (Photorhabdus luminescens subsp. laumondii) protein is Probable 4-amino-4-deoxy-L-arabinose-phosphoundecaprenol flippase subunit ArnF.